A 457-amino-acid chain; its full sequence is Siroheme synthase (457 aa).

The interval 1–204 (MDHLPIFCQL…NDQKAITETT (204 aa)) is precorrin-2 dehydrogenase /sirohydrochlorin ferrochelatase. Residues 22–23 (DV) and 43–44 (LA) each bind NAD(+). Ser128 is subject to Phosphoserine. Positions 216–457 (GEVVLVGAGP…RDKLNWFSNH (242 aa)) are uroporphyrinogen-III C-methyltransferase. Pro225 is an S-adenosyl-L-methionine binding site. Asp248 functions as the Proton acceptor in the catalytic mechanism. Residue Lys270 is the Proton donor of the active site. S-adenosyl-L-methionine contacts are provided by residues 301-303 (GGD), Ile306, 331-332 (TA), Met382, and Gly411.

In the N-terminal section; belongs to the precorrin-2 dehydrogenase / sirohydrochlorin ferrochelatase family. It in the C-terminal section; belongs to the precorrin methyltransferase family.

It carries out the reaction uroporphyrinogen III + 2 S-adenosyl-L-methionine = precorrin-2 + 2 S-adenosyl-L-homocysteine + H(+). The enzyme catalyses precorrin-2 + NAD(+) = sirohydrochlorin + NADH + 2 H(+). It catalyses the reaction siroheme + 2 H(+) = sirohydrochlorin + Fe(2+). The protein operates within cofactor biosynthesis; adenosylcobalamin biosynthesis; precorrin-2 from uroporphyrinogen III: step 1/1. It participates in cofactor biosynthesis; adenosylcobalamin biosynthesis; sirohydrochlorin from precorrin-2: step 1/1. It functions in the pathway porphyrin-containing compound metabolism; siroheme biosynthesis; precorrin-2 from uroporphyrinogen III: step 1/1. Its pathway is porphyrin-containing compound metabolism; siroheme biosynthesis; siroheme from sirohydrochlorin: step 1/1. The protein operates within porphyrin-containing compound metabolism; siroheme biosynthesis; sirohydrochlorin from precorrin-2: step 1/1. Multifunctional enzyme that catalyzes the SAM-dependent methylations of uroporphyrinogen III at position C-2 and C-7 to form precorrin-2 via precorrin-1. Then it catalyzes the NAD-dependent ring dehydrogenation of precorrin-2 to yield sirohydrochlorin. Finally, it catalyzes the ferrochelation of sirohydrochlorin to yield siroheme. The chain is Siroheme synthase from Shigella boydii serotype 18 (strain CDC 3083-94 / BS512).